Here is a 367-residue protein sequence, read N- to C-terminus: Leucine carboxyl methyltransferase 1 (367 aa).

S-adenosyl-L-methionine is bound by residues Arg84, Gly109, Asp132, 187-188 (DL), and Glu212.

The protein belongs to the methyltransferase superfamily. LCMT family.

The catalysed reaction is [phosphatase 2A protein]-C-terminal L-leucine + S-adenosyl-L-methionine = [phosphatase 2A protein]-C-terminal L-leucine methyl ester + S-adenosyl-L-homocysteine. Its function is as follows. Methylates the carboxyl group of the C-terminal leucine residue of protein phosphatase 2A catalytic subunits to form alpha-leucine ester residues. The chain is Leucine carboxyl methyltransferase 1 (PPM1) from Candida albicans (strain SC5314 / ATCC MYA-2876) (Yeast).